We begin with the raw amino-acid sequence, 123 residues long: MARIAGVDLPRDKRVEIALTYIYGIGRPTANVILKKTGINPDTRVKDLTEEEVAKLRDEIEKNYKVEGELRREVALNIKRLIEIGCYRGIRHRKGLPVRGQRTRTNARTRKGPRRTVGVKRKK.

The tract at residues 99 to 123 (RGQRTRTNARTRKGPRRTVGVKRKK) is disordered.

The protein belongs to the universal ribosomal protein uS13 family. Part of the 30S ribosomal subunit. Forms a loose heterodimer with protein S19. Forms two bridges to the 50S subunit in the 70S ribosome.

Functionally, located at the top of the head of the 30S subunit, it contacts several helices of the 16S rRNA. In the 70S ribosome it contacts the 23S rRNA (bridge B1a) and protein L5 of the 50S subunit (bridge B1b), connecting the 2 subunits; these bridges are implicated in subunit movement. Contacts the tRNAs in the A and P-sites. The sequence is that of Small ribosomal subunit protein uS13 from Carboxydothermus hydrogenoformans (strain ATCC BAA-161 / DSM 6008 / Z-2901).